Consider the following 564-residue polypeptide: R-linalool synthase (564 aa).

Positions 320, 324, 464, 468, and 472 each coordinate Mg(2+). The short motif at Asp-320–Asp-324 is the DDXXD motif element.

The protein belongs to the terpene synthase family. Mg(2+) is required as a cofactor. The cofactor is Mn(2+).

It catalyses the reaction (2E)-geranyl diphosphate + H2O = (R)-linalool + diphosphate. In terms of biological role, specifically catalyzes production of (R)-(-)-linalool, the main component of lavender essential oil. The protein is R-linalool synthase of Lavandula angustifolia (Lavender).